Consider the following 317-residue polypeptide: SURF1-like protein (317 aa).

Helical transmembrane passes span 78-98 (GSILMLGLPAFAFSLGVWQIY) and 293-313 (HMNYLTTWFTLTLVTMLMWIH).

The protein belongs to the SURF1 family.

The protein localises to the mitochondrion inner membrane. Functionally, probably involved in the biogenesis of the COX complex. This chain is SURF1-like protein (sft-1), found in Caenorhabditis briggsae.